A 327-amino-acid polypeptide reads, in one-letter code: Transaldolase (327 aa).

The Schiff-base intermediate with substrate role is filled by Lys-132.

This sequence belongs to the transaldolase family. Type 1 subfamily.

It localises to the cytoplasm. The enzyme catalyses D-sedoheptulose 7-phosphate + D-glyceraldehyde 3-phosphate = D-erythrose 4-phosphate + beta-D-fructose 6-phosphate. Its pathway is carbohydrate degradation; pentose phosphate pathway; D-glyceraldehyde 3-phosphate and beta-D-fructose 6-phosphate from D-ribose 5-phosphate and D-xylulose 5-phosphate (non-oxidative stage): step 2/3. Transaldolase is important for the balance of metabolites in the pentose-phosphate pathway. The chain is Transaldolase from Chlamydia trachomatis serovar D (strain ATCC VR-885 / DSM 19411 / UW-3/Cx).